A 282-amino-acid polypeptide reads, in one-letter code: (4-alkanoyl-5-oxo-2,5-dihydrofuran-3-yl)methyl phosphate reductase (282 aa).

Residue 6 to 11 (GATGAV) participates in NADP(+) binding.

This sequence belongs to the NmrA-type oxidoreductase family.

The catalysed reaction is a [(3S,4R)-4-alkanoyl-5-oxooxolan-3-yl]methyl phosphate + NADP(+) = a (4-alkanoyl-5-oxo-2,5-dihydrofuran-3-yl)methyl phosphate + NADPH + H(+). The enzyme catalyses [(3S,4R)-4-(6-methylheptanoyl)-5-oxooxolan-3-yl]methyl phosphate + NADP(+) = [4-(6-methylheptanoyl)-5-oxo-2H-furan-3-yl]methyl phosphate + NADPH + H(+). In terms of biological role, involved in the biosynthesis of A factor (2-isocapryloyl-3R-hydroxymethyl-gamma-butyrolactone), a gamma-butyrolactone autoregulator that triggers secondary metabolism and morphogenesis in Streptomyces. Catalyzes the reduction of the butenolide phosphate produced by nonenzymatic intramolecular condensation of the 8-methyl-3-oxononanoyl-DHAP ester. This is (4-alkanoyl-5-oxo-2,5-dihydrofuran-3-yl)methyl phosphate reductase from Streptomyces griseus subsp. griseus (strain JCM 4626 / CBS 651.72 / NBRC 13350 / KCC S-0626 / ISP 5235).